Consider the following 111-residue polypeptide: uncharacterized protein (111 aa).

A run of 2 helical transmembrane segments spans residues 18 to 38 (LNVF…LFVS) and 42 to 62 (LALA…RTFP).

Its subcellular location is the membrane. This is an uncharacterized protein from Saccharomyces cerevisiae (strain ATCC 204508 / S288c) (Baker's yeast).